A 233-amino-acid polypeptide reads, in one-letter code: MRAICVLSGGLDSAVTSLAAKFENYDITTVTFNYGQMALNQEIKSAKKISEILNADHHVIDINFVKEFSKSGLNTGEIPEPEKEDLDDFEKSEKTMKAVWVPARNMIMFSIASGFAEGIGAEKIFSGLNKEEGVTFPDNTPEFIERFNKSLEYGTLNKVKMVAPLYELNKPEIAKLGKELEVKLDLEVLKYSYSCYRDNGEDYLHCGTCESCMRRKRAFKEAGIVDPTKYLVE.

7–17 contacts ATP; sequence LSGGLDSAVTS. C195, C206, C209, and C212 together coordinate Zn(2+).

This sequence belongs to the QueC family. It depends on Zn(2+) as a cofactor.

The catalysed reaction is 7-carboxy-7-deazaguanine + NH4(+) + ATP = 7-cyano-7-deazaguanine + ADP + phosphate + H2O + H(+). Its pathway is purine metabolism; 7-cyano-7-deazaguanine biosynthesis. In terms of biological role, catalyzes the ATP-dependent conversion of 7-carboxy-7-deazaguanine (CDG) to 7-cyano-7-deazaguanine (preQ(0)). This is 7-cyano-7-deazaguanine synthase from Methanococcus maripaludis (strain C7 / ATCC BAA-1331).